Consider the following 898-residue polypeptide: MSRFFHAKEDSDSDTSSSEDEVEDQKVNKSAKFRDDLDFMAGPEEDEKRVVRAQKDKKFDELKGIIKQNRDAKSNKDLNRLLTGFDSLAKAYDKSKTVFQRQNVANPRFYIRSLVEIEDYVNKLWDDKDAKSALSKNNAKALPPLRQKLKKYIKDQQLQDLVTDYRVNPDEDGYETPEDEDDDDFGEVSESKAEKSPGKPSEKAAVSDSDSDSDDDDSSNWSSEPESNSSDDEDSVTKMEQLRRYFLKKEFRVESKDDKKEKKKRVIRVKEAVEEDDDADWTPVNREKSVVHFDPKEEVTHDVMIKKLNEVMSARGKRTTDRNQHVANLRKLLEVSEEKELGLGINVKISFCIISALFELNAKISDHMEYETFMTTLQTVNSLLDLLIGTDRVKLSVTYAEEDENLKDDTQEYRIQGSILIAVQRLDGELAKILQNADCHSNDYIEKLKAEKDMCSLIEKAEKYVELRNDSGIFDKHEVCKVYMMRIEHAYYKYQDQNEEDAGKLMDYLCNKIYTLDDEKRLRQRAMLCHVYYLAVHDKWHRARDLLLMSHMQAIVDHSDVDTQILYNRTICQLGLCAFRHGFIREAHQGLSEIQNTQRAKELLAQAVGTRQHEKTAEQEKIDRSRQVPYHMHINVELMECVYLICSMLLEIPHMASCEFEMRRRMLSRSFHYQLKQSEKASLTGPPENTREHVVAASKAMLNGDWKKCQDYIVNDKMNQKVWNLFHNAETVKGMVVRRIQEESLRTYLLTYSTVYATVSLKKLADLFELSKKDVHSIISKMIIQEELSATLDEPTDCLIMHRVEPSRLQMLALNLSDKLQTLAENNEQILEPRTGRGGYQGPGSWFPGRNERQGDKQKGSGGYQGERRGGQGQDGKRGNWGSQGGQQRRHPQKPRAF.

Over residues 1 to 10 (MSRFFHAKED) the composition is skewed to basic and acidic residues. 2 disordered regions span residues 1-38 (MSRF…DDLD) and 162-238 (VTDY…SVTK). The span at 11-23 (SDSDTSSSEDEVE) shows a compositional bias: acidic residues. The span at 24–37 (DQKVNKSAKFRDDL) shows a compositional bias: basic and acidic residues. The segment covering 170-187 (DEDGYETPEDEDDDDFGE) has biased composition (acidic residues). Over residues 189–202 (SESKAEKSPGKPSE) the composition is skewed to basic and acidic residues. Positions 209–218 (SDSDSDDDDS) are enriched in acidic residues. Positions 219 to 228 (SNWSSEPESN) are enriched in low complexity. One can recognise a PCI domain in the interval 630–806 (YHMHINVELM…DCLIMHRVEP (177 aa)). Positions 829-898 (QILEPRTGRG…RRHPQKPRAF (70 aa)) are disordered. Basic and acidic residues-rich tracts occupy residues 850–859 (RNERQGDKQK) and 866–878 (GERR…DGKR). The span at 888–898 (QRRHPQKPRAF) shows a compositional bias: basic residues.

It belongs to the eIF-3 subunit C family. In terms of assembly, component of the eukaryotic translation initiation factor 3 (eIF-3) complex.

The protein resides in the cytoplasm. Its function is as follows. Component of the eukaryotic translation initiation factor 3 (eIF-3) complex, which is involved in protein synthesis of a specialized repertoire of mRNAs and, together with other initiation factors, stimulates binding of mRNA and methionyl-tRNAi to the 40S ribosome. The eIF-3 complex specifically targets and initiates translation of a subset of mRNAs involved in cell proliferation. This is Eukaryotic translation initiation factor 3 subunit C from Caenorhabditis elegans.